Consider the following 255-residue polypeptide: Type III pantothenate kinase (255 aa).

D6–V13 is an ATP binding site. Residues Y100 and G107–R110 each bind substrate. D109 (proton acceptor) is an active-site residue. Residue D129 participates in K(+) binding. T132 contacts ATP. A substrate-binding site is contributed by T184.

The protein belongs to the type III pantothenate kinase family. In terms of assembly, homodimer. It depends on NH4(+) as a cofactor. K(+) serves as cofactor.

It localises to the cytoplasm. It carries out the reaction (R)-pantothenate + ATP = (R)-4'-phosphopantothenate + ADP + H(+). The protein operates within cofactor biosynthesis; coenzyme A biosynthesis; CoA from (R)-pantothenate: step 1/5. Its function is as follows. Catalyzes the phosphorylation of pantothenate (Pan), the first step in CoA biosynthesis. The sequence is that of Type III pantothenate kinase from Syntrophotalea carbinolica (strain DSM 2380 / NBRC 103641 / GraBd1) (Pelobacter carbinolicus).